The sequence spans 395 residues: S-adenosylmethionine synthase 2 (395 aa).

Residue glutamate 9 coordinates Mg(2+). Histidine 15 serves as a coordination point for ATP. Residue glutamate 43 participates in K(+) binding. L-methionine-binding residues include glutamate 56 and glutamine 99. ATP contacts are provided by residues 167–169, 235–238, aspartate 246, 252–253, alanine 269, lysine 273, and lysine 277; these read DGK, SGRF, and RK. Position 246 (aspartate 246) interacts with L-methionine. Lysine 277 contacts L-methionine.

The protein belongs to the AdoMet synthase family. In terms of assembly, homotetramer. The cofactor is Mn(2+). It depends on Mg(2+) as a cofactor. Co(2+) is required as a cofactor. K(+) serves as cofactor.

It localises to the cytoplasm. It carries out the reaction L-methionine + ATP + H2O = S-adenosyl-L-methionine + phosphate + diphosphate. The protein operates within amino-acid biosynthesis; S-adenosyl-L-methionine biosynthesis; S-adenosyl-L-methionine from L-methionine: step 1/1. Its function is as follows. Catalyzes the formation of S-adenosylmethionine from methionine and ATP. The reaction comprises two steps that are both catalyzed by the same enzyme: formation of S-adenosylmethionine (AdoMet) and triphosphate, and subsequent hydrolysis of the triphosphate. The sequence is that of S-adenosylmethionine synthase 2 (METK2) from Suaeda salsa (Seepweed).